The chain runs to 157 residues: SsrA-binding protein (157 aa).

The protein belongs to the SmpB family.

It localises to the cytoplasm. In terms of biological role, required for rescue of stalled ribosomes mediated by trans-translation. Binds to transfer-messenger RNA (tmRNA), required for stable association of tmRNA with ribosomes. tmRNA and SmpB together mimic tRNA shape, replacing the anticodon stem-loop with SmpB. tmRNA is encoded by the ssrA gene; the 2 termini fold to resemble tRNA(Ala) and it encodes a 'tag peptide', a short internal open reading frame. During trans-translation Ala-aminoacylated tmRNA acts like a tRNA, entering the A-site of stalled ribosomes, displacing the stalled mRNA. The ribosome then switches to translate the ORF on the tmRNA; the nascent peptide is terminated with the 'tag peptide' encoded by the tmRNA and targeted for degradation. The ribosome is freed to recommence translation, which seems to be the essential function of trans-translation. The polypeptide is SsrA-binding protein (Chlorobium phaeovibrioides (strain DSM 265 / 1930) (Prosthecochloris vibrioformis (strain DSM 265))).